We begin with the raw amino-acid sequence, 141 residues long: Ribosome-binding factor A (141 aa).

It belongs to the RbfA family. Monomer. Binds 30S ribosomal subunits, but not 50S ribosomal subunits or 70S ribosomes.

It localises to the cytoplasm. Its function is as follows. One of several proteins that assist in the late maturation steps of the functional core of the 30S ribosomal subunit. Associates with free 30S ribosomal subunits (but not with 30S subunits that are part of 70S ribosomes or polysomes). Required for efficient processing of 16S rRNA. May interact with the 5'-terminal helix region of 16S rRNA. This Beijerinckia indica subsp. indica (strain ATCC 9039 / DSM 1715 / NCIMB 8712) protein is Ribosome-binding factor A.